We begin with the raw amino-acid sequence, 318 residues long: Ribose-phosphate pyrophosphokinase 2 (318 aa).

Arginine 96 to aspartate 101 provides a ligand contact to ATP. The Mg(2+) site is built by aspartate 128, histidine 130, aspartate 139, and aspartate 143. Histidine 130 contributes to the ATP binding site. The segment at lysine 212–glycine 227 is binding of phosphoribosylpyrophosphate.

The protein belongs to the ribose-phosphate pyrophosphokinase family. In terms of assembly, homodimer. The active form is probably a hexamer composed of 3 homodimers. Mg(2+) is required as a cofactor.

It carries out the reaction D-ribose 5-phosphate + ATP = 5-phospho-alpha-D-ribose 1-diphosphate + AMP + H(+). It participates in metabolic intermediate biosynthesis; 5-phospho-alpha-D-ribose 1-diphosphate biosynthesis; 5-phospho-alpha-D-ribose 1-diphosphate from D-ribose 5-phosphate (route I): step 1/1. With respect to regulation, activated by magnesium and inorganic phosphate. Competitively or non-competitively inhibited by ADP, 2,3-bisphosphoglyceride or GDP. Its function is as follows. Catalyzes the synthesis of phosphoribosylpyrophosphate (PRPP) that is essential for nucleotide synthesis. The protein is Ribose-phosphate pyrophosphokinase 2 (Prps2) of Mus musculus (Mouse).